A 1192-amino-acid chain; its full sequence is Integrator complex subunit 2 (1192 aa).

Residues 420-436 (FVSLSFCMLLAFSTLVS) traverse the membrane as a helical segment.

The protein belongs to the Integrator subunit 2 family. Component of the Integrator complex, composed of core subunits INTS1, INTS2, INTS3, INTS4, INTS5, INTS6, INTS7, INTS8, INTS9/RC74, INTS10, INTS11/CPSF3L, INTS12, INTS13, INTS14 and INTS15. The core complex associates with protein phosphatase 2A subunits PPP2CA and PPP2R1A, to form the Integrator-PP2A (INTAC) complex.

The protein localises to the nucleus. It localises to the nucleus membrane. The protein resides in the cytoplasm. In terms of biological role, component of the integrator complex, a multiprotein complex that terminates RNA polymerase II (Pol II) transcription in the promoter-proximal region of genes. The integrator complex provides a quality checkpoint during transcription elongation by driving premature transcription termination of transcripts that are unfavorably configured for transcriptional elongation: the complex terminates transcription by (1) catalyzing dephosphorylation of the C-terminal domain (CTD) of Pol II subunit POLR2A/RPB1 and SUPT5H/SPT5, (2) degrading the exiting nascent RNA transcript via endonuclease activity and (3) promoting the release of Pol II from bound DNA. The integrator complex is also involved in terminating the synthesis of non-coding Pol II transcripts, such as enhancer RNAs (eRNAs), small nuclear RNAs (snRNAs), telomerase RNAs and long non-coding RNAs (lncRNAs). The polypeptide is Integrator complex subunit 2 (INTS2) (Gallus gallus (Chicken)).